The following is a 75-amino-acid chain: Exodeoxyribonuclease 7 small subunit (75 aa).

The protein belongs to the XseB family. Heterooligomer composed of large and small subunits.

It localises to the cytoplasm. The enzyme catalyses Exonucleolytic cleavage in either 5'- to 3'- or 3'- to 5'-direction to yield nucleoside 5'-phosphates.. Functionally, bidirectionally degrades single-stranded DNA into large acid-insoluble oligonucleotides, which are then degraded further into small acid-soluble oligonucleotides. This Chlamydia pneumoniae (Chlamydophila pneumoniae) protein is Exodeoxyribonuclease 7 small subunit.